The sequence spans 216 residues: Uracil phosphoribosyltransferase (216 aa).

5-phospho-alpha-D-ribose 1-diphosphate-binding positions include Arg85, Arg110, and 136–144 (DPMLATGNS). Residues Ile201 and 206–208 (GDA) contribute to the uracil site. Asp207 serves as a coordination point for 5-phospho-alpha-D-ribose 1-diphosphate.

Belongs to the UPRTase family. Mg(2+) serves as cofactor.

The enzyme catalyses UMP + diphosphate = 5-phospho-alpha-D-ribose 1-diphosphate + uracil. Its pathway is pyrimidine metabolism; UMP biosynthesis via salvage pathway; UMP from uracil: step 1/1. With respect to regulation, allosterically activated by GTP. Catalyzes the conversion of uracil and 5-phospho-alpha-D-ribose 1-diphosphate (PRPP) to UMP and diphosphate. The sequence is that of Uracil phosphoribosyltransferase from Rhodospirillum centenum (strain ATCC 51521 / SW).